Reading from the N-terminus, the 449-residue chain is Plasmepsin IV (449 aa).

Residues 1–37 (MALTVKEEEFSNTLIKNASAFDRLKLGNLKNLKIQKK) lie on the Cytoplasmic side of the membrane. Positions 1–121 (MALTVKEEEF…SGYAQKGYLG (121 aa)) are excised as a propeptide. Residues 38 to 58 (LQFLYLILFVLITGVFFFFLI) traverse the membrane as a helical; Signal-anchor for type II membrane protein segment. The Lumenal portion of the chain corresponds to 59 to 449 (GNFYSHRKLY…SVGFAVAKNL (391 aa)). The region spanning 137 to 444 (FYGEGQIGTN…DYEKESVGFA (308 aa)) is the Peptidase A1 domain. The active site involves aspartate 155. Residues cysteine 168 and cysteine 173 are joined by a disulfide bond. Residue aspartate 335 is part of the active site. An intrachain disulfide couples cysteine 370 to cysteine 406.

Belongs to the peptidase A1 family. In terms of assembly, component of the hemozoin formation complex (HFC) composed of falcipains FP2A and/or FP2B, plasmepsins PMII, PMIII/HAP and PMIV, heme detoxifying protein HDP and falcilysin FLN. The HFC complex is involved in hemoglobin degradation and detoxification of heme in the food vacuole during the asexual blood stage. Proteolytically cleaved into the soluble active mature form by cysteine proteases in the digestive vacuole of trophozoites. Proteolysis requires an acidic environment. Autoprocessing or transprocessing by other plasmepsins such as PMII may serve as an alternate activation system.

It is found in the membrane. The protein resides in the vacuole lumen. It catalyses the reaction Hydrolysis of the bonds linking certain hydrophobic residues in hemoglobin or globin. Also cleaves small molecules substrates such as Ala-Leu-Glu-Arg-Thr-Phe-|-Phe(NO2)-Ser-Phe-Pro-Thr.. Inhibited by KNI derived compounds KNI-10333 and to a lesser extent KNI-10743. During the asexual blood stage, catalyzes the cleavage of denatured host hemoglobin (Hb). Digestion of host Hb is an essential step which provides the parasite with amino acids for protein synthesis, and regulates osmolarity. This is Plasmepsin IV from Plasmodium falciparum (isolate 3D7).